Reading from the N-terminus, the 188-residue chain is dCTP deaminase (188 aa).

Residues 111–116 (KSTYAR), 135–137 (TLE), Q156, Y170, and Q180 contribute to the dCTP site. Residue E137 is the Proton donor/acceptor of the active site.

The protein belongs to the dCTP deaminase family. In terms of assembly, homotrimer.

The catalysed reaction is dCTP + H2O + H(+) = dUTP + NH4(+). It participates in pyrimidine metabolism; dUMP biosynthesis; dUMP from dCTP (dUTP route): step 1/2. Its function is as follows. Catalyzes the deamination of dCTP to dUTP. This chain is dCTP deaminase, found in Thiobacillus denitrificans (strain ATCC 25259 / T1).